The sequence spans 96 residues: MKKRCEFLIFGKVQGVGFRRFVKYRVDKLNEESKVLSGNVCNLSDGSVRVIAQGEEEALEKLCKILEIGPIKSEVERIQSREIDIDESLNDFEILR.

Positions 4-96 (RCEFLIFGKV…ESLNDFEILR (93 aa)) constitute an Acylphosphatase-like domain. Active-site residues include arginine 19 and asparagine 42.

Belongs to the acylphosphatase family.

It carries out the reaction an acyl phosphate + H2O = a carboxylate + phosphate + H(+). This is Acylphosphatase (acyP) from Helicobacter hepaticus (strain ATCC 51449 / 3B1).